A 334-amino-acid polypeptide reads, in one-letter code: Anthranilate phosphoribosyltransferase (334 aa).

5-phospho-alpha-D-ribose 1-diphosphate contacts are provided by residues Gly-79, 82–83, Ser-87, 89–92, 107–115, and Ser-119; these read GD, NIST, and KHGNRSISS. Gly-79 contributes to the anthranilate binding site. A Mg(2+)-binding site is contributed by Ser-91. Residue Asn-110 participates in anthranilate binding. Position 165 (Arg-165) interacts with anthranilate. The Mg(2+) site is built by Asp-224 and Glu-225.

It belongs to the anthranilate phosphoribosyltransferase family. Homodimer. Mg(2+) is required as a cofactor.

It catalyses the reaction N-(5-phospho-beta-D-ribosyl)anthranilate + diphosphate = 5-phospho-alpha-D-ribose 1-diphosphate + anthranilate. It functions in the pathway amino-acid biosynthesis; L-tryptophan biosynthesis; L-tryptophan from chorismate: step 2/5. In terms of biological role, catalyzes the transfer of the phosphoribosyl group of 5-phosphorylribose-1-pyrophosphate (PRPP) to anthranilate to yield N-(5'-phosphoribosyl)-anthranilate (PRA). This Streptococcus pneumoniae (strain ATCC 700669 / Spain 23F-1) protein is Anthranilate phosphoribosyltransferase.